The primary structure comprises 401 residues: Imidazolonepropionase (401 aa).

H66 and H68 together coordinate Fe(3+). Zn(2+)-binding residues include H66 and H68. 4-imidazolone-5-propanoate contacts are provided by R75, Y138, and H171. Residue Y138 participates in N-formimidoyl-L-glutamate binding. H236 contributes to the Fe(3+) binding site. Residue H236 participates in Zn(2+) binding. Q239 is a 4-imidazolone-5-propanoate binding site. D311 contacts Fe(3+). Residue D311 participates in Zn(2+) binding. Residues N313 and G315 each contribute to the N-formimidoyl-L-glutamate site. T316 provides a ligand contact to 4-imidazolone-5-propanoate.

It belongs to the metallo-dependent hydrolases superfamily. HutI family. Requires Zn(2+) as cofactor. The cofactor is Fe(3+).

It is found in the cytoplasm. It catalyses the reaction 4-imidazolone-5-propanoate + H2O = N-formimidoyl-L-glutamate. It participates in amino-acid degradation; L-histidine degradation into L-glutamate; N-formimidoyl-L-glutamate from L-histidine: step 3/3. Its function is as follows. Catalyzes the hydrolytic cleavage of the carbon-nitrogen bond in imidazolone-5-propanoate to yield N-formimidoyl-L-glutamate. It is the third step in the universal histidine degradation pathway. This Pseudomonas entomophila (strain L48) protein is Imidazolonepropionase.